A 156-amino-acid polypeptide reads, in one-letter code: MEKIPMTRAGFAALDDELKLLKTVERPAVIRAIAEAREHGDLSENAEYHAAREKQSFIEGRIKELEALLSLAEVIDPARLSGSIKFGATVTILDEETEEEKTYQIVGEAEADIENGLLNIKSPLARALIGKDEGDSIEVKTPGGERGYEVVSVRFV.

A coiled-coil region spans residues 46–73 (AEYHAAREKQSFIEGRIKELEALLSLAE).

This sequence belongs to the GreA/GreB family.

In terms of biological role, necessary for efficient RNA polymerase transcription elongation past template-encoded arresting sites. The arresting sites in DNA have the property of trapping a certain fraction of elongating RNA polymerases that pass through, resulting in locked ternary complexes. Cleavage of the nascent transcript by cleavage factors such as GreA or GreB allows the resumption of elongation from the new 3'terminus. GreA releases sequences of 2 to 3 nucleotides. This is Transcription elongation factor GreA from Cereibacter sphaeroides (strain ATCC 17025 / ATH 2.4.3) (Rhodobacter sphaeroides).